A 112-amino-acid chain; its full sequence is UPF0060 membrane protein SAV_4756 (112 aa).

A run of 4 helical transmembrane segments spans residues 8-28, 33-53, 62-82, and 91-111; these read ALFV…WQGV, GWLW…VATL, ILAA…MVAD, and VTGA…PRGG.

The protein belongs to the UPF0060 family.

It is found in the cell membrane. This Streptomyces avermitilis (strain ATCC 31267 / DSM 46492 / JCM 5070 / NBRC 14893 / NCIMB 12804 / NRRL 8165 / MA-4680) protein is UPF0060 membrane protein SAV_4756.